The sequence spans 122 residues: Semaphorin-like protein A43 (122 aa).

The region spanning 1 to 122 (MIYLYTADNV…RIMYLFYEYH (122 aa)) is the Sema domain.

Belongs to the semaphorin family.

This chain is Semaphorin-like protein A43 (A43R), found in Homo sapiens (Human).